A 321-amino-acid chain; its full sequence is Lipoyl synthase (321 aa).

Cys68, Cys73, Cys79, Cys94, Cys98, Cys101, and Ser308 together coordinate [4Fe-4S] cluster. The region spanning 80-297 (FNHGTATFMI…KAEALAMGFT (218 aa)) is the Radical SAM core domain.

Belongs to the radical SAM superfamily. Lipoyl synthase family. [4Fe-4S] cluster serves as cofactor.

The protein resides in the cytoplasm. The catalysed reaction is [[Fe-S] cluster scaffold protein carrying a second [4Fe-4S](2+) cluster] + N(6)-octanoyl-L-lysyl-[protein] + 2 oxidized [2Fe-2S]-[ferredoxin] + 2 S-adenosyl-L-methionine + 4 H(+) = [[Fe-S] cluster scaffold protein] + N(6)-[(R)-dihydrolipoyl]-L-lysyl-[protein] + 4 Fe(3+) + 2 hydrogen sulfide + 2 5'-deoxyadenosine + 2 L-methionine + 2 reduced [2Fe-2S]-[ferredoxin]. Its pathway is protein modification; protein lipoylation via endogenous pathway; protein N(6)-(lipoyl)lysine from octanoyl-[acyl-carrier-protein]: step 2/2. Functionally, catalyzes the radical-mediated insertion of two sulfur atoms into the C-6 and C-8 positions of the octanoyl moiety bound to the lipoyl domains of lipoate-dependent enzymes, thereby converting the octanoylated domains into lipoylated derivatives. The chain is Lipoyl synthase from Escherichia fergusonii (strain ATCC 35469 / DSM 13698 / CCUG 18766 / IAM 14443 / JCM 21226 / LMG 7866 / NBRC 102419 / NCTC 12128 / CDC 0568-73).